A 591-amino-acid polypeptide reads, in one-letter code: MKKISLPKIGIRPVIDGRRMGVRESLEAQTMNMAKATAALISEKLRHACGARVECVIADTCIAGMAESAACEEKFSSQNVGVTITVTPCWCYGSETIDMDPLRPKAIWGFNGTERPGAVYLAAALAAHSQKGIPAFSIYGHDVQDADDTSIPADVEEKLLRFARAGLAVASMKGKSYLSLGGVSMGIAGSIVDHNFFESWLGMKVQAVDMTELRRRIDQKIYDETELEMALAWADKHFRYGEDQNAEQYKRNETQSRAVLKESLLMAMCIRDMMQGNPKLAEKGLVEESLGYNAIAAGFQGQRHWTDQYPNGDTAEALLNSSFDWNGVREPFVVATENDSLNGVAMLMGHQLTGTAQVFADVRTYWSPDAVERVTGQPLTGRAEHGIIHLINSGSAALDGSCQQRDAQGNPTMKPHWEIEQNEADACLAATEWCPAIHEYFRGGGFSSRFLTEGGVPFTMTRVNIIKGLGPVLQIAEGWSVALPKAMHDQLDARTNSTWPTTWFAPRLTGKGPFSDVYSVMANWGANHGVLTIGHVGADFITLAAMLRIPVCMHNVEAAKIYRPSAWAAHGMDIEGQDYRACQNYGPLYKR.

Active-site proton acceptor residues include Glu-337 and Asp-361. Mn(2+) contacts are provided by Glu-337, Asp-361, and His-528.

The protein belongs to the L-fucose isomerase family. In terms of assembly, homohexamer. The cofactor is Mn(2+).

The protein resides in the cytoplasm. The enzyme catalyses L-fucose = L-fuculose. The protein operates within carbohydrate degradation; L-fucose degradation; L-lactaldehyde and glycerone phosphate from L-fucose: step 1/3. Converts the aldose L-fucose into the corresponding ketose L-fuculose. This chain is L-fucose isomerase, found in Klebsiella pneumoniae (strain 342).